The primary structure comprises 361 residues: MSQLFNFSAGPAMLPVDVLKQAQEELLNWNGQGVSVMEISHRDPVYVHMAREAEQDLRDLLNVPDDYEVLFLQGGGRGQFSAVPQNIASPDATVDYLDTGIWSGFAIREAEKFVSKVNVAGQVQEGAKGKEIQSPENWKLSENAAYFHYCPNETVDGIALHEIPDVKAPIVADMSSNILSEPLDVSKFGVIYAGAQKNIGPSGFAIAIVKKSLLGHPQKQVSSIMDYQLQAKDGSMYNTPNTFAWYLAGLVFKWLKAQGGLTAMGERNRHKAQLLYDFVDKSDFYRNDINPAYRSIMNIPFQLAYDKLDAEFLQGAKNQGLLGLKGHRFVGGMRASIYNAMPVEGVEALLNYMADFERKLG.

Arg42 serves as a coordination point for L-glutamate. Pyridoxal 5'-phosphate-binding positions include 76–77 (GR), Trp102, Thr154, Asp173, and Gln196. Lys197 carries the post-translational modification N6-(pyridoxal phosphate)lysine. 238-239 (NT) contributes to the pyridoxal 5'-phosphate binding site.

This sequence belongs to the class-V pyridoxal-phosphate-dependent aminotransferase family. SerC subfamily. Homodimer. Requires pyridoxal 5'-phosphate as cofactor.

Its subcellular location is the cytoplasm. It carries out the reaction O-phospho-L-serine + 2-oxoglutarate = 3-phosphooxypyruvate + L-glutamate. It catalyses the reaction 4-(phosphooxy)-L-threonine + 2-oxoglutarate = (R)-3-hydroxy-2-oxo-4-phosphooxybutanoate + L-glutamate. Its pathway is amino-acid biosynthesis; L-serine biosynthesis; L-serine from 3-phospho-D-glycerate: step 2/3. It participates in cofactor biosynthesis; pyridoxine 5'-phosphate biosynthesis; pyridoxine 5'-phosphate from D-erythrose 4-phosphate: step 3/5. In terms of biological role, catalyzes the reversible conversion of 3-phosphohydroxypyruvate to phosphoserine and of 3-hydroxy-2-oxo-4-phosphonooxybutanoate to phosphohydroxythreonine. The protein is Phosphoserine aminotransferase of Idiomarina loihiensis (strain ATCC BAA-735 / DSM 15497 / L2-TR).